The following is a 415-amino-acid chain: Glutamyl-tRNA reductase (415 aa).

Substrate is bound by residues 49–52, Ser-104, 109–111, and Gln-115; these read TCNR and EPQ. The Nucleophile role is filled by Cys-50. Position 184–189 (184–189) interacts with NADP(+); sequence GAGEMI.

This sequence belongs to the glutamyl-tRNA reductase family. In terms of assembly, homodimer.

It carries out the reaction (S)-4-amino-5-oxopentanoate + tRNA(Glu) + NADP(+) = L-glutamyl-tRNA(Glu) + NADPH + H(+). It functions in the pathway porphyrin-containing compound metabolism; protoporphyrin-IX biosynthesis; 5-aminolevulinate from L-glutamyl-tRNA(Glu): step 1/2. In terms of biological role, catalyzes the NADPH-dependent reduction of glutamyl-tRNA(Glu) to glutamate 1-semialdehyde (GSA). This Neisseria meningitidis serogroup C (strain 053442) protein is Glutamyl-tRNA reductase.